Here is a 354-residue protein sequence, read N- to C-terminus: Protein RecA (354 aa).

67–74 (GPESSGKT) is an ATP binding site.

It belongs to the RecA family.

It is found in the cytoplasm. In terms of biological role, can catalyze the hydrolysis of ATP in the presence of single-stranded DNA, the ATP-dependent uptake of single-stranded DNA by duplex DNA, and the ATP-dependent hybridization of homologous single-stranded DNAs. It interacts with LexA causing its activation and leading to its autocatalytic cleavage. The sequence is that of Protein RecA from Hamiltonella defensa subsp. Acyrthosiphon pisum (strain 5AT).